Here is a 1755-residue protein sequence, read N- to C-terminus: Transposon Ty1-JR1 Gag-Pol polyprotein (1755 aa).

Low complexity predominate over residues 1 to 16 (MESQQLSQHSHISHGS). 3 disordered regions span residues 1–93 (MESQ…MMTQ), 126–173 (PQSQ…RPPP), and 352–421 (GSRN…SKST). Composition is skewed to polar residues over residues 48–60 (TKAN…TPAS) and 127–152 (QSQF…GNTF). Low complexity predominate over residues 153 to 165 (TDSSSADSDMTST). The segment at 299-401 (NNGIHINNKV…NSKSKTARAH (103 aa)) is RNA-binding. Residues 402 to 418 (NVSTSNNSPSTDNDSIS) show a composition bias toward low complexity. Residue serine 416 is modified to Phosphoserine. Aspartate 461 (for protease activity; shared with dimeric partner) is an active-site residue. Residues 583–640 (NVHTSESTRKYPYPFIHRMLAHANAQTIRYSLKNNTITYFNESDVDWSSAIDYQCPDC) form an integrase-type zinc finger-like region. The Integrase catalytic domain occupies 660–835 (NSYEPFQYLH…AGLDISTLLP (176 aa)). Aspartate 671 and aspartate 736 together coordinate Mg(2+). Disordered regions lie at residues 956 to 1087 (SKAV…ETEK), 1092 to 1111 (RSPS…NIVP), and 1130 to 1186 (DLPL…EDNE). The segment covering 960–969 (SPTDSTPPST) has biased composition (low complexity). Residues 1005–1015 (STPQISNIEST) are compositionally biased toward polar residues. Basic and acidic residues predominate over residues 1038-1053 (ESSHASKSKDFRHSDS). 2 stretches are compositionally biased toward polar residues: residues 1054–1082 (YSEN…QISD) and 1101–1111 (PENNSSHNIVP). The short motif at 1178 to 1212 (KKRSLEDNETEIKVSRDTWNTKNMRSLEPPRSKKR) is the Bipartite nuclear localization signal element. Residues 1338-1476 (NNYYITQLDI…DILGLEIKYQ (139 aa)) form the Reverse transcriptase Ty1/copia-type domain. Mg(2+)-binding residues include aspartate 1346, aspartate 1427, aspartate 1428, aspartate 1610, glutamate 1652, and aspartate 1685. In terms of domain architecture, RNase H Ty1/copia-type spans 1610–1752 (DASYGNQPYY…IKTFKLLTNK (143 aa)).

The capsid protein forms a homotrimer, from which the VLPs are assembled. The protease is a homodimer, whose active site consists of two apposed aspartic acid residues. In terms of processing, initially, virus-like particles (VLPs) are composed of the structural unprocessed proteins Gag and Gag-Pol, and also contain the host initiator methionine tRNA (tRNA(i)-Met) which serves as a primer for minus-strand DNA synthesis, and a dimer of genomic Ty RNA. Processing of the polyproteins occurs within the particle and proceeds by an ordered pathway, called maturation. First, the protease (PR) is released by autocatalytic cleavage of the Gag-Pol polyprotein yielding capsid protein p45 and a Pol-p154 precursor protein. This cleavage is a prerequisite for subsequent processing of Pol-p154 at the remaining sites to release the mature structural and catalytic proteins. Maturation takes place prior to the RT reaction and is required to produce transposition-competent VLPs.

It is found in the cytoplasm. Its subcellular location is the nucleus. It carries out the reaction DNA(n) + a 2'-deoxyribonucleoside 5'-triphosphate = DNA(n+1) + diphosphate. It catalyses the reaction Endonucleolytic cleavage to 5'-phosphomonoester.. Its function is as follows. Capsid protein (CA) is the structural component of the virus-like particle (VLP), forming the shell that encapsulates the retrotransposons dimeric RNA genome. The particles are assembled from trimer-clustered units and there are holes in the capsid shells that allow for the diffusion of macromolecules. CA also has nucleocapsid-like chaperone activity, promoting primer tRNA(i)-Met annealing to the multipartite primer-binding site (PBS), dimerization of Ty1 RNA and initiation of reverse transcription. In terms of biological role, the aspartyl protease (PR) mediates the proteolytic cleavages of the Gag and Gag-Pol polyproteins after assembly of the VLP. Reverse transcriptase/ribonuclease H (RT) is a multifunctional enzyme that catalyzes the conversion of the retro-elements RNA genome into dsDNA within the VLP. The enzyme displays a DNA polymerase activity that can copy either DNA or RNA templates, and a ribonuclease H (RNase H) activity that cleaves the RNA strand of RNA-DNA heteroduplexes during plus-strand synthesis and hydrolyzes RNA primers. The conversion leads to a linear dsDNA copy of the retrotransposon that includes long terminal repeats (LTRs) at both ends. Functionally, integrase (IN) targets the VLP to the nucleus, where a subparticle preintegration complex (PIC) containing at least integrase and the newly synthesized dsDNA copy of the retrotransposon must transit the nuclear membrane. Once in the nucleus, integrase performs the integration of the dsDNA into the host genome. The sequence is that of Transposon Ty1-JR1 Gag-Pol polyprotein (TY1B-JR1) from Saccharomyces cerevisiae (strain ATCC 204508 / S288c) (Baker's yeast).